A 743-amino-acid chain; its full sequence is Peptide transporter family 1 (743 aa).

The interval 1-28 (MASEITNGKNGQNGKNGQKEESDSQIAP) is disordered. Low complexity predominate over residues 7–16 (NGKNGQNGKN). Helical transmembrane passes span 74–94 (VLFH…ALIA), 104–124 (ILYL…GAVP), 132–152 (AVTV…KPCV), 173–193 (FSLF…FTPI), 207–227 (FSLA…IFMA), 334–354 (VVNP…IYPA), 364–384 (LQKL…SAGL), 597–619 (LPQI…EFSY), 629–649 (VLQA…VVIA), and 659–679 (GEFT…LWLA).

This sequence belongs to the major facilitator superfamily. Proton-dependent oligopeptide transporter (POT/PTR) (TC 2.A.17) family. As to expression, expressed in thorax and abdomen of females: apical epithelial membranes of midgut, rectum, and reproductive tract. Also expressed in neuropil of the central nervous system, with elevated expression within the alpha- and beta-lobes of the mushroom bodies.

Its subcellular location is the membrane. In terms of biological role, important role in absorption of dietary peptides. High-affinity transporter of alanylalanine. Dipeptide transport activity is proton dependent. The polypeptide is Peptide transporter family 1 (yin) (Drosophila melanogaster (Fruit fly)).